Consider the following 297-residue polypeptide: MAKVSELYDVTWEEMRDKMRKWREENSRNSEQIVEVGEELINEYGSKLGDDIWIIYEQVMIAALDYGRDDLALFCLQELRRQFPGSHRVKRLTGMRFEAMERYDDAIQLYDRILQEDPTNTAARKRKIAIRKAQGKNVEAIRELNEYLEQFVGDQEAWHELAELYINEHDYAKAAFCLEELMMTNPHNHLYCQQYAEVKYTQGGLENLELSRKYFAQALKLNNRNMRALFGLYMSASHIASNPKASAKTKKDNMKYASWAASQINRAYQFAGRSKKETKYSLKAVEDMLETLQITQS.

Ala-2 carries the N-acetylalanine modification. TPR repeat units follow at residues 87–120 (HRVK…DPTN), 155–188 (QEAW…NPHN), and 192–225 (CQQY…NNRN). Lys-255 carries the N6-acetyllysine modification.

Belongs to the EMC2 family. Component of the ER membrane protein complex (EMC). Interacts with WNK1 (via amphipathic alpha-helix region); promoting the ER membrane protein complex assembly by preventing EMC2 ubiquitination. In terms of processing, ubiquitinated when soluble in the cytoplasm, leading to its degradation by the proteasome. Interaction with EMC2 prevents its ubiquitination and degradation.

It localises to the endoplasmic reticulum membrane. Functionally, part of the endoplasmic reticulum membrane protein complex (EMC) that enables the energy-independent insertion into endoplasmic reticulum membranes of newly synthesized membrane proteins. Preferentially accommodates proteins with transmembrane domains that are weakly hydrophobic or contain destabilizing features such as charged and aromatic residues. Involved in the cotranslational insertion of multi-pass membrane proteins in which stop-transfer membrane-anchor sequences become ER membrane spanning helices. It is also required for the post-translational insertion of tail-anchored/TA proteins in endoplasmic reticulum membranes. By mediating the proper cotranslational insertion of N-terminal transmembrane domains in an N-exo topology, with translocated N-terminus in the lumen of the ER, controls the topology of multi-pass membrane proteins like the G protein-coupled receptors. By regulating the insertion of various proteins in membranes, it is indirectly involved in many cellular processes. In Pongo abelii (Sumatran orangutan), this protein is ER membrane protein complex subunit 2.